The following is a 226-amino-acid chain: Large ribosomal subunit protein uL1 (226 aa).

The protein belongs to the universal ribosomal protein uL1 family. As to quaternary structure, part of the 50S ribosomal subunit.

In terms of biological role, binds directly to 23S rRNA. The L1 stalk is quite mobile in the ribosome, and is involved in E site tRNA release. Its function is as follows. Protein L1 is also a translational repressor protein, it controls the translation of the L11 operon by binding to its mRNA. The protein is Large ribosomal subunit protein uL1 of Mycoplasma capricolum subsp. capricolum (strain California kid / ATCC 27343 / NCTC 10154).